The primary structure comprises 139 residues: Acidic phospholipase A2 DE-I (139 aa).

An N-terminal signal peptide occupies residues 1–16 (MRTLWIMAVLLLGVEG). Disulfide bonds link Cys-42–Cys-132, Cys-44–Cys-60, Cys-59–Cys-111, Cys-65–Cys-139, Cys-66–Cys-104, Cys-73–Cys-97, and Cys-91–Cys-102. 3 residues coordinate Ca(2+): Tyr-43, Gly-45, and Gly-47. His-63 is a catalytic residue. Ca(2+) is bound at residue Asp-64. Asp-105 is an active-site residue.

The cofactor is Ca(2+). As to expression, expressed by the venom gland.

The protein resides in the secreted. The catalysed reaction is a 1,2-diacyl-sn-glycero-3-phosphocholine + H2O = a 1-acyl-sn-glycero-3-phosphocholine + a fatty acid + H(+). Functionally, snake venom phospholipase A2 (PLA2) that inhibits the ADP- and collagen-induced human platelet aggregation. Exhibits high hydrolytic activities and preferred the anionic micelles to the zwitterionic micelles. PLA2 catalyzes the calcium-dependent hydrolysis of the 2-acyl groups in 3-sn-phosphoglycerides. The chain is Acidic phospholipase A2 DE-I from Ovophis okinavensis (Ryukyu Island pit viper).